The primary structure comprises 162 residues: NADH-quinone oxidoreductase subunit C (162 aa).

The protein belongs to the complex I 30 kDa subunit family. In terms of assembly, NDH-1 is composed of 14 different subunits. Subunits NuoB, C, D, E, F, and G constitute the peripheral sector of the complex.

It localises to the cell inner membrane. The catalysed reaction is a quinone + NADH + 5 H(+)(in) = a quinol + NAD(+) + 4 H(+)(out). Its function is as follows. NDH-1 shuttles electrons from NADH, via FMN and iron-sulfur (Fe-S) centers, to quinones in the respiratory chain. The immediate electron acceptor for the enzyme in this species is believed to be ubiquinone. Couples the redox reaction to proton translocation (for every two electrons transferred, four hydrogen ions are translocated across the cytoplasmic membrane), and thus conserves the redox energy in a proton gradient. This chain is NADH-quinone oxidoreductase subunit C, found in Trichlorobacter lovleyi (strain ATCC BAA-1151 / DSM 17278 / SZ) (Geobacter lovleyi).